The sequence spans 670 residues: MDIFLVVLVLLTIIAISNIVNRFIPFIPVPLIQVALGILAASFPQGLHFELNTELFFVLFIAPLLFNDGKRTPRAELWNLRAPILLLALGLVFATVIVGGYTIHWMIPAIPLAAAFGLAAILSPTDVVAVSALSGRVKMPKGILRLLEGEGLMNDASGLVAFKFAIAAAVTGAFSLAQAAVSFVFISLGGLLCGVVISFLIIRFRLFLRRLGMQDVTMHMLIQILTPFVIYLAAEEIGVSGILAVVAGGITHAVEQDRLESTMIKLQIVSSSTWNIILFILNGLVFVILGTQIPDVISVIFNDTAISNMKVIGYILVITFTLMLLRFLWVLFFWNGKWFFNKDQNIYKPGLRSTLLISISGVRGAVTLAGSFSIPYFLEDGTPFPERNLILFLAAGVILCTLVIATVVLPILTEKEEEDEERNKKLLTARRKLIKTALQTIKEDMNETNKTASLAVIAEYNEKMKNLRFQQYTSSNRIKKHERKVRAQGVKAEQEALMKMLERGDIPEETANVLQERFNELEILYANPFKVGLSKTRLKRLMYWIFFGEHKKPEMSILNEAGLIRATRVKTAKAAIEYLEKHKTDEHKEVFLSVITFYKQLIFRLEHSHHELKSSAHFENQKLEVKLKAVQAIRNEIQTLFEEREISRDISHELRQYINDVEAAMLEGGE.

11 consecutive transmembrane segments (helical) span residues 5–27 (LVVLVLLTIIAISNIVNRFIPFI), 46–66 (GLHFELNTELFFVLFIAPLLF), 83–103 (PILLLALGLVFATVIVGGYTI), 105–125 (WMIPAIPLAAAFGLAAILSPT), 156–176 (ASGLVAFKFAIAAAVTGAFSL), 182–202 (SFVFISLGGLLCGVVISFLII), 228–248 (FVIYLAAEEIGVSGILAVVAG), 276–296 (IILFILNGLVFVILGTQIPDV), 314–334 (YILVITFTLMLLRFLWVLFFW), 355–375 (LLISISGVRGAVTLAGSFSIP), and 389–409 (LILFLAAGVILCTLVIATVVL).

It belongs to the monovalent cation:proton antiporter 1 (CPA1) transporter (TC 2.A.36) family. Nhak (TC 2.A.36.3.2) subfamily.

The protein localises to the cell membrane. In terms of biological role, transporter involved in the efflux of sodium, potassium, lithium and rubidium. This Bacillus subtilis (strain 168) protein is Sodium, potassium, lithium and rubidium/H(+) antiporter (nhaK).